A 260-amino-acid chain; its full sequence is Acidic leucine-rich nuclear phosphoprotein 32 family member E (260 aa).

An N-acetylmethionine modification is found at M1. LRR repeat units follow at residues E18–N38, E43–N64, K65–C87, and N89–Q110. K68 is covalently cross-linked (Glycyl lysine isopeptide (Lys-Gly) (interchain with G-Cter in SUMO2)). One can recognise an LRRCT domain in the interval C123–E161. Composition is skewed to acidic residues over residues D149–V208 and I218–E240. A disordered region spans residues D149–D260. The tract at residues E207–D260 is ZID domain. Basic and acidic residues predominate over residues G241–A251.

The protein belongs to the ANP32 family. Component of a SWR1-like complex, composed of EP400, KAT5/TIP60, TRRAP, BRD8, RUVBL1, RUVBL2, ING3 and ANP32E; the complex does not contain SRCAP. Interacts with H2A.Z/H2AZ1. Interacts with the importin alpha KPNA1 and KPNA2. In terms of processing, phosphorylated. The phosphorylation is nuclear localization signal (NLS)-dependent. In terms of tissue distribution, expressed at highest levels in cerebellum and spleen. In the cerebellum, expressed mainly in granule cells and, to a lesser extent, in Purkinje cells.

The protein localises to the cytoplasm. Its subcellular location is the nucleus. Functionally, histone chaperone that specifically mediates the genome-wide removal of histone H2A.Z/H2AZ1 from the nucleosome: removes H2A.Z/H2AZ1 from its normal sites of deposition, especially from enhancer and insulator regions. Not involved in deposition of H2A.Z/H2AZ1 in the nucleosome. May stabilize the evicted H2A.Z/H2AZ1-H2B dimer, thus shifting the equilibrium towards dissociation and the off-chromatin state. Inhibits activity of protein phosphatase 2A (PP2A). Does not inhibit protein phosphatase 1. May play a role in cerebellar development and synaptogenesis. The protein is Acidic leucine-rich nuclear phosphoprotein 32 family member E (Anp32e) of Mus musculus (Mouse).